A 431-amino-acid polypeptide reads, in one-letter code: MPAIVLIGAQWGDEGKGKATDLLGGRVQWVVRYQGGNNAGHTVVLPTGENFALHLIPSGILTPGVTNVIGNGVVVDPGVLLTELRGLEERGVDTERLLISADAHLLMPYHVAIDKVVERYAGSKKIGTTGRGIGPCYQDKIARQGIRVADVLDPAVLAEKIEGALELKNQVLVKIYNRKALEPAEVVENLLEQAEGFKHRIADARLLLNQALERDEIVLLEGSQGTLLDVDHGTYPYVTSSNPTAGGASVGSGIGPTRITTVLGILKAYTTRVGSGPFPTELFDEHGAYLAKTGGEVGVTTGRARRCGWFDAVIARYATRVNGITDYFLTKLDVLSSLETVPICVGYTIDGKRTDEMPMTQSDIARAEPVYEELPGWWEDISGAREFDDLPAKARDYVLRLEELAGAHVSCIGVGPGRDQTIVRRDVLAPS.

GTP-binding positions include 12–18 (GDEGKGK) and 40–42 (GHT). The Proton acceptor role is filled by Asp13. Residues Asp13 and Gly40 each coordinate Mg(2+). IMP-binding positions include 13-16 (DEGK), 38-41 (NAGH), Thr129, Arg143, Gln224, Thr239, and Arg303. His41 serves as the catalytic Proton donor. 299-305 (VTTGRAR) provides a ligand contact to substrate. GTP is bound by residues Arg305, 331–333 (KLD), and 413–415 (GVG).

This sequence belongs to the adenylosuccinate synthetase family. In terms of assembly, homodimer. The cofactor is Mg(2+).

It localises to the cytoplasm. The catalysed reaction is IMP + L-aspartate + GTP = N(6)-(1,2-dicarboxyethyl)-AMP + GDP + phosphate + 2 H(+). Its pathway is purine metabolism; AMP biosynthesis via de novo pathway; AMP from IMP: step 1/2. Functionally, plays an important role in the de novo pathway of purine nucleotide biosynthesis. Catalyzes the first committed step in the biosynthesis of AMP from IMP. The protein is Adenylosuccinate synthetase of Mycobacterium sp. (strain KMS).